A 188-amino-acid polypeptide reads, in one-letter code: Elongation factor P (188 aa).

It belongs to the elongation factor P family.

It is found in the cytoplasm. It participates in protein biosynthesis; polypeptide chain elongation. Its function is as follows. Involved in peptide bond synthesis. Stimulates efficient translation and peptide-bond synthesis on native or reconstituted 70S ribosomes in vitro. Probably functions indirectly by altering the affinity of the ribosome for aminoacyl-tRNA, thus increasing their reactivity as acceptors for peptidyl transferase. The protein is Elongation factor P of Bdellovibrio bacteriovorus (strain ATCC 15356 / DSM 50701 / NCIMB 9529 / HD100).